The primary structure comprises 3957 residues: Ankyrin-2 (3957 aa).

Over residues 1-14 (MMNEDAAQKSDSGE) the composition is skewed to basic and acidic residues. Positions 1–34 (MMNEDAAQKSDSGEKFNGSSQRRKRPKKSDSNAS) are disordered. ANK repeat units follow at residues 30-62 (DSNA…TCNQ), 63-92 (NGLN…SVDS), 96-125 (KGNT…NINA), 129-158 (NGFT…NQST), 162-191 (DGFT…KGKV), 193-220 (LPAL…NADV), 232-261 (SGFT…AVDF), 265-294 (NGIT…QIDA), 298-327 (DGLT…PLLA), 331-360 (NGLS…PVDD), 364-393 (DYLT…NPNA), 397-426 (NGFT…SIQA), 430-459 (SGLT…SPDV), 463-492 (RGET…LVDA), 496-525 (EEQT…HPDA), 529-558 (NGYT…AHSL), 562-591 (KGFT…AADS), 595-624 (NGLT…SPHA), 628-657 (NGYT…ETNI), 661-690 (QGVT…NIHM), 694-723 (SGLT…DQDA), 727-756 (LGYT…NVNA), 760-789 (NGYT…KPNA), and 793-822 (NGNT…EVTT). 2 positions are modified to phosphoserine: serine 31 and serine 34. Tyrosine 378 carries the phosphotyrosine modification. The residue at position 531 (tyrosine 531) is a Phosphotyrosine. Serine 846 carries the phosphoserine modification. Threonine 853 carries the phosphothreonine modification. A Phosphoserine modification is found at serine 874. Positions 966–1125 (SGFLVSFMVD…ELNEILNGMD (160 aa)) are interaction with SPTBN1. ZU5 domains lie at 968 to 1156 (FLVS…VVSR) and 1158 to 1304 (KQDS…LIDC). Residues 1289 to 1423 (VSFTTNVSAR…FVKVRDTTQE (135 aa)) form a UPA domain region. Position 1382 is a phosphotyrosine (tyrosine 1382). The Death 1 domain maps to 1450–1535 (ITLPIYTKES…SDKAGSIKVK (86 aa)). A disordered region spans residues 1457 to 1486 (KESESDQEQEEEIDMTSEKNDETESTETSV). Serine 1459, serine 1461, serine 1473, serine 1500, and serine 1596 each carry phosphoserine. The span at 1461-1471 (SDQEQEEEIDM) shows a compositional bias: acidic residues. 7 disordered regions span residues 1670–2137 (AVGR…TDFS), 2197–2411 (ALDG…GLEL), 2430–2484 (AVSH…GIFP), 2507–2586 (SRLL…TPEE), 2604–2852 (EAKQ…SLPH), 2864–2904 (DISA…TDRF), and 2923–2951 (QITS…ANHT). 2 stretches are compositionally biased toward basic and acidic residues: residues 1674–1683 (SSEKEGKDIP) and 1711–1733 (KQKQ…KGSS). Serine 1732, serine 1733, and serine 1736 each carry phosphoserine. Basic and acidic residues predominate over residues 1766–1783 (IKDKVKALQKRVEDEQKG). Repeat A repeat units lie at residues 1806–1817 (HPAASPSLKSER), 1818–1829 (HAPGSPSPKTER), 1830–1841 (HSTLSSSAKTER), 1842–1853 (HPPVSPSSKTEK), 1854–1865 (HSPVSPSAKTER), 1866–1877 (HSPASSSSKTEK), and 1878–1889 (HSPVSPSTKTER). The interval 1806-1983 (HPAASPSLKS…PVSPTSKTER (178 aa)) is repeat-rich region. 2 positions are modified to phosphoserine: serine 1855 and serine 1858. 2 stretches are compositionally biased toward basic and acidic residues: residues 1886-1902 (KTER…ERHP) and 1921-1937 (RTEK…EKRL). The Repeat A; approximate repeat unit spans residues 1890–1900 (HSPVSSTKTER). 2 Repeat A repeats span residues 1901–1912 (HPPVSPSGKTDK) and 1913–1924 (RPPVSPSGRTEK). A Repeat A; approximate repeat occupies 1925–1935 (HPPVSPGRTEK). Residue serine 1929 is modified to Phosphoserine. 4 Repeat A repeats span residues 1936–1947 (RLPVSPSGRTDK), 1948–1959 (HQPVSTAGKTEK), 1960–1971 (HLPVSPSGKTEK), and 1972–1983 (QPPVSPTSKTER). Composition is skewed to basic and acidic residues over residues 1980-1994 (KTER…RELM), 2003-2034 (PSKH…KEKG), 2075-2093 (VKKE…HKIP), and 2102-2117 (EESH…KMAD). Serine 2127 is modified (phosphoserine). A compositionally biased stretch (basic and acidic residues) spans 2128-2137 (PDRKTSTDFS). Threonine 2239 is subject to Phosphothreonine. The span at 2240–2251 (PETSPESLSFSP) shows a compositional bias: polar residues. At serine 2243 the chain carries Phosphoserine. Basic and acidic residues predominate over residues 2252-2282 (KKSEEQTGETKESTKTETTTEIRSEKEHPTT). Phosphothreonine is present on threonine 2269. Position 2275 is a phosphoserine (serine 2275). Polar residues predominate over residues 2355–2376 (TFGSSAHKTQTDSEVQESTATS). A phosphoserine mark is found at serine 2405, serine 2440, serine 2454, serine 2516, and serine 2521. Residues 2523 to 2545 (EQTSLMESSGKSPLSPDTPSSEE) are compositionally biased toward polar residues. 2 stretches are compositionally biased toward basic and acidic residues: residues 2576–2586 (NGEKKRFTPEE) and 2604–2619 (EAKQ…KQEE). Threonine 2583 bears the Phosphothreonine mark. Phosphoserine occurs at positions 2679 and 2701. Residues 2696 to 2705 (PSSMDSNSSP) are compositionally biased toward low complexity. Positions 2729 to 2776 (EPGKSEEEKDSESHLAEDRHAVSTEAEDRSYDKLNRDTDQPKICDGHG) are enriched in basic and acidic residues. Phosphoserine is present on residues serine 2781 and serine 2795. Low complexity predominate over residues 2781-2791 (SPSSSAAPVSS). A compositionally biased stretch (polar residues) spans 2892–2903 (SQDSSITTQTDR). Serine 2956 carries the post-translational modification Phosphoserine. Disordered regions lie at residues 2987-3016 (NFEG…SSFE), 3069-3099 (LMVD…SEQN), and 3136-3462 (QESR…PTKE). Positions 2998-3016 (QQESTLWEMQSDSVSSSFE) are enriched in polar residues. Phosphoserine is present on serine 3075. Threonine 3078 is subject to Phosphothreonine. Over residues 3078-3087 (TTPDTTPART) the composition is skewed to low complexity. Polar residues predominate over residues 3090 to 3099 (EEGTPTSEQN). A compositionally biased stretch (basic and acidic residues) spans 3137-3149 (ESREETLSEDVKE). The span at 3157 to 3169 (LPLETSAESLALS) shows a compositional bias: low complexity. A compositionally biased stretch (acidic residues) spans 3175–3194 (VDDEADLLPDDVSEEVEEIP). Polar residues-rich tracts occupy residues 3198-3212 (AQLN…STET) and 3256-3265 (LDFSTLTRSV). Residues serine 3273, serine 3276, and serine 3277 each carry the phosphoserine modification. Over residues 3335–3344 (EENKADEAKP) the composition is skewed to basic and acidic residues. The segment covering 3357-3374 (VEQQLSDLDTSVQKTVAP) has biased composition (polar residues). Phosphoserine occurs at positions 3390 and 3409. A compositionally biased stretch (basic and acidic residues) spans 3409-3423 (SYTETETESRERAEE). Low complexity predominate over residues 3446-3460 (SRSTTSSCRGGTSPT). Serine 3474 bears the Phosphoserine mark. In terms of domain architecture, Death 2 spans 3569 to 3653 (IEERLAYIAD…DIVHLMETNT (85 aa)). Phosphoserine is present on serine 3735. Residues threonine 3776, threonine 3797, threonine 3803, and threonine 3814 each carry the phosphothreonine modification. Residues 3777 to 3858 (PGTETSETQK…VESADNQPET (82 aa)) are disordered. Serine 3823 bears the Phosphoserine mark. The segment covering 3832–3841 (PSEHREESSP) has biased composition (basic and acidic residues). Position 3909 is a phosphoserine (serine 3909).

In terms of assembly, interacts with RHBG and SPTBN1. Colocalizes with Na/K ATPase, Na/Ca exchanger and SPTBN1. Directly interacts with DMD; this interaction is necessary for DMD localization at the sarcolemma. Interacts with DCTN4; this interaction is required for DCTN4 retention at costameres. Identified in complexes that contain VIM, EZR, AHNAK, BFSP1, BFSP2, ANK2, PLEC, PRX and spectrin. Interacts (via death domain) with RABGAP1L (via Rab-GAP TBC domain). In terms of processing, phosphorylated at multiple sites by different protein kinases and each phosphorylation event regulates the protein's structure and function. As to expression, present in plasma membrane of neurons as well as glial cells throughout the brain. Expressed in fetal brain and in temporal cortex of adult brain. Also expressed in the inner segments of rod photoreceptors in retina.

The protein localises to the cytoplasm. Its subcellular location is the cytoskeleton. The protein resides in the membrane. It is found in the myofibril. It localises to the sarcomere. The protein localises to the m line. Its subcellular location is the apical cell membrane. The protein resides in the cell membrane. It is found in the postsynaptic cell membrane. It localises to the early endosome. The protein localises to the recycling endosome. Its subcellular location is the lysosome. The protein resides in the mitochondrion. It is found in the z line. It localises to the sarcolemma. The protein localises to the T-tubule. Its function is as follows. Plays an essential role in the localization and membrane stabilization of ion transporters and ion channels in several cell types, including cardiomyocytes, as well as in striated muscle cells. In skeletal muscle, required for proper localization of DMD and DCTN4 and for the formation and/or stability of a special subset of microtubules associated with costameres and neuromuscular junctions. In cardiomyocytes, required for coordinate assembly of Na/Ca exchanger, SLC8A1/NCX1, Na/K ATPases ATP1A1 and ATP1A2 and inositol 1,4,5-trisphosphate (InsP3) receptors at sarcoplasmic reticulum/sarcolemma sites. Required for expression and targeting of SPTBN1 in neonatal cardiomyocytes and for the regulation of neonatal cardiomyocyte contraction rate. In the inner segment of rod photoreceptors, required for the coordinated expression of the Na/K ATPase, Na/Ca exchanger and beta-2-spectrin (SPTBN1). Plays a role in endocytosis and intracellular protein transport. Associates with phosphatidylinositol 3-phosphate (PI3P)-positive organelles and binds dynactin to promote long-range motility of cells. Recruits RABGAP1L to (PI3P)-positive early endosomes, where RABGAP1L inactivates RAB22A, and promotes polarized trafficking to the leading edge of the migrating cells. Part of the ANK2/RABGAP1L complex which is required for the polarized recycling of fibronectin receptor ITGA5 ITGB1 to the plasma membrane that enables continuous directional cell migration. The chain is Ankyrin-2 (ANK2) from Homo sapiens (Human).